The sequence spans 87 residues: Small ribosomal subunit protein bS20 (87 aa).

This sequence belongs to the bacterial ribosomal protein bS20 family.

Its function is as follows. Binds directly to 16S ribosomal RNA. This is Small ribosomal subunit protein bS20 from Sphingopyxis alaskensis (strain DSM 13593 / LMG 18877 / RB2256) (Sphingomonas alaskensis).